The chain runs to 596 residues: Two-component response regulator ARR12 (596 aa).

Positions 18–133 (RVLAVDDDQT…ELKNIWQHVV (116 aa)) constitute a Response regulatory domain. The residue at position 69 (D69) is a 4-aspartylphosphate. Basic and acidic residues predominate over residues 138 to 153 (DKNRGSNNNGDKRDGS). The segment at 138–192 (DKNRGSNNNGDKRDGSGNEGVGNSDQNNGKGNRKRKDQYNEDEDEDRDDNDDSCA) is disordered. Residues 158-167 (VGNSDQNNGK) are compositionally biased toward polar residues. Over residues 177-189 (NEDEDEDRDDNDD) the composition is skewed to acidic residues. Positions 194-197 (KKQR) match the Nuclear localization signal motif. The segment at residues 197-247 (RVVWTVELHKKFVAAVNQLGYEKAMPKKILDLMNVEKLTRENVASHLQKFR) is a DNA-binding region (myb-like GARP). The interval 437–467 (NAVSSSTHPPPPAHNSNSINHQFDVSPLPHS) is disordered. The span at 450 to 459 (HNSNSINHQF) shows a compositional bias: polar residues.

This sequence belongs to the ARR family. Type-B subfamily. In terms of assembly, binds the target DNA as a monomer. Post-translationally, two-component system major event consists of a His-to-Asp phosphorelay between a sensor histidine kinase (HK) and a response regulator (RR). In plants, the His-to-Asp phosphorelay involves an additional intermediate named Histidine-containing phosphotransfer protein (HPt). This multistep phosphorelay consists of a His-Asp-His-Asp sequential transfer of a phosphate group between first a His and an Asp of the HK protein, followed by the transfer to a conserved His of the HPt protein and finally the transfer to an Asp in the receiver domain of the RR protein. In terms of tissue distribution, detected in the whole plant. Predominantly expressed in leaves. Expressed at the root transition zone.

Its subcellular location is the nucleus. Its function is as follows. Transcriptional activator that binds specifically to the DNA sequence 5'-[AG]GATT-3'. Functions as a response regulator involved in His-to-Asp phosphorelay signal transduction system. Phosphorylation of the Asp residue in the receiver domain activates the ability of the protein to promote the transcription of target genes. Could directly activate some type-A response regulators in response to cytokinins. Involved in the root-meristem size determination through the regulation of cell differentiation. Involved in activating SHY2 during meristem growth and controls PIN expression via activation of SHY2. In Arabidopsis thaliana (Mouse-ear cress), this protein is Two-component response regulator ARR12 (ARR12).